The sequence spans 893 residues: UPF0182 protein CLB_0018 (893 aa).

A run of 7 helical transmembrane segments spans residues 9 to 29 (IPLF…NFII), 49 to 69 (AIII…WMYY), 94 to 114 (LFFI…SSSY), 154 to 174 (VIIS…FILE), 202 to 222 (LAIV…IKIW), 246 to 266 (FYKI…LSIV), and 273 to 293 (VSIC…ASFL).

Belongs to the UPF0182 family.

Its subcellular location is the cell membrane. The sequence is that of UPF0182 protein CLB_0018 from Clostridium botulinum (strain ATCC 19397 / Type A).